Consider the following 752-residue polypeptide: MALLAMHSWRWAAAAAAFEKRRHSAILIRPLVSVSGSGPQWRPHQLGALGTARAYQIPESLKSITWQRLGKGNSGQFLDAAKALQVWPLIEKRTCWHGHAGGGLHTDPKEGLKDVDTRKIIKAMLSYVWPKDRPDLRARVAISLGFLGGAKAMNIVVPFMFKYAVDSLNQMSGNMLNLSDAPNTVATMATAVLIGYGVSRAGAAFFNEVRNAVFGKVAQNSIRRIAKNVFLHLHNLDLGFHLSRQTGALSKAIDRGTRGISFVLSALVFNLLPIMFEVMLVSGVLYYKCGAQFALVTLGTLGTYTAFTVAVTRWRTRFRIEMNKADNDAGNAAIDSLLNYETVKYFNNERYEAQRYDGFLKTYETASLKSTSTLAMLNFGQSAIFSVGLTAIMVLASQGIVAGTLTVGDLVMVNGLLFQLSLPLNFLGTVYRETRQALIDMNTLFTLLKVDTQIKDKVMASPLQITPQTATVAFDNVHFEYIEGQKVLSGISFEVPAGKKVAIVGGSGSGKSTIVRLLFRFYEPQKGSIYLAGQNIQDVSLESLRRAVGVVPQDAVLFHNTIYYNLLYGNISASPEEVYAVAKLAGLHDAILRMPHGYDTQVGERGLKLSGGEKQRVAIARAILKDPPVILYDEATSSLDSITEETILGAMKDVVKHRTSIFIAHRLSTVVDADEIIVLDQGKVAERGTHHGLLANPHSIYSEMWHTQSSRVQNHDNPKWEAKKENISKEEERKKLQEEIVNSVKGCGNCSC.

Residues 1-22 (MALLAMHSWRWAAAAAAFEKRR) constitute a mitochondrion transit peptide. At 23–140 (HSAILIRPLV…KDRPDLRARV (118 aa)) the chain is on the mitochondrial matrix side. An ABC transmembrane type-1 domain is found at 140–436 (VAISLGFLGG…LGTVYRETRQ (297 aa)). Residues 141 to 161 (AISLGFLGGAKAMNIVVPFMF) traverse the membrane as a helical segment. Residues 162-185 (KYAVDSLNQMSGNMLNLSDAPNTV) are Mitochondrial intermembrane-facing. The chain crosses the membrane as a helical span at residues 186 to 206 (ATMATAVLIGYGVSRAGAAFF). Topologically, residues 207 to 259 (NEVRNAVFGKVAQNSIRRIAKNVFLHLHNLDLGFHLSRQTGALSKAIDRGTRG) are mitochondrial matrix. Residues Lys216 and Lys251 each carry the N6-acetyllysine modification. Residues 260–280 (ISFVLSALVFNLLPIMFEVML) traverse the membrane as a helical segment. The Mitochondrial intermembrane segment spans residues 281-290 (VSGVLYYKCG). A helical membrane pass occupies residues 291–311 (AQFALVTLGTLGTYTAFTVAV). Topologically, residues 312-382 (TRWRTRFRIE…TLAMLNFGQS (71 aa)) are mitochondrial matrix. 315–319 (RTRFR) provides a ligand contact to glutathione. Ser336 carries the post-translational modification Phosphoserine. The residue at position 340 (Tyr340) is a Phosphotyrosine. Phosphothreonine is present on Thr342. Residue 378 to 381 (NFGQ) participates in glutathione binding. The chain crosses the membrane as a helical span at residues 383–403 (AIFSVGLTAIMVLASQGIVAG). Residues 404-409 (TLTVGD) are Mitochondrial intermembrane-facing. A helical membrane pass occupies residues 410-430 (LVMVNGLLFQLSLPLNFLGTV). Gly428 contacts glutathione. Residues 431 to 752 (YRETRQALID…SVKGCGNCSC (322 aa)) lie on the Mitochondrial matrix side of the membrane. Positions 472 to 706 (VAFDNVHFEY…PHSIYSEMWH (235 aa)) constitute an ABC transporter domain. Residues Tyr481 and 505–516 (GGSGSGKSTIVR) contribute to the ATP site.

The protein belongs to the ABC transporter superfamily. ABCB family. Heavy Metal importer (TC 3.A.1.210) subfamily. Homodimer or heterodimer. Interacts with C10orf88/PAAT. Forms a complex with ABCB10 and FECH, where a dimeric FECH bridges ABCB7 and ABCB10 homodimers; this complex may be required for cellular iron homeostasis, mitochondrial function and heme biosynthesis. Interacts with FECH. Interacts with ATP5F1A. Interacts with COX4I1; this interaction allows the regulation of cellular iron homeostasis and cellular reactive oxygen species (ROS) levels in cardiomyocytes.

The protein resides in the mitochondrion inner membrane. It carries out the reaction (glutathione)4[2Fe(III)-2S] cluster(in) + ATP + H2O = (glutathione)4[2Fe(III)-2S] cluster(out) + ADP + phosphate + H(+). With respect to regulation, ATPase activity is stimulated by glutathione. Its function is as follows. Exports glutathione-coordinated iron-sulfur clusters such as [2Fe-2S]-(GS)4 cluster from the mitochondria to the cytosol in an ATP-dependent manner allowing the assembly of the cytosolic iron-sulfur (Fe/S) cluster-containing proteins and participates in iron homeostasis. Moreover, through a functional complex formed of ABCB7, FECH and ABCB10, also plays a role in the cellular iron homeostasis, mitochondrial function and heme biosynthesis. In cardiomyocytes, regulates cellular iron homeostasis and cellular reactive oxygen species (ROS) levels through its interaction with COX4I1. May also play a role in hematopoiesis. In Homo sapiens (Human), this protein is Iron-sulfur clusters transporter ABCB7, mitochondrial.